The primary structure comprises 385 residues: 1-deoxy-D-xylulose 5-phosphate reductoisomerase (385 aa).

Residues threonine 10, glycine 11, isoleucine 13, glycine 36, and asparagine 38 each contribute to the NADPH site. Lysine 123 contacts 1-deoxy-D-xylulose 5-phosphate. Glutamate 124 is a binding site for NADPH. Aspartate 148 serves as a coordination point for Mn(2+). Positions 149, 150, 172, and 195 each coordinate 1-deoxy-D-xylulose 5-phosphate. Glutamate 150 provides a ligand contact to Mn(2+). NADPH is bound at residue glycine 201. Serine 208, asparagine 213, lysine 214, and glutamate 217 together coordinate 1-deoxy-D-xylulose 5-phosphate. Mn(2+) is bound at residue glutamate 217.

Belongs to the DXR family. Requires Mg(2+) as cofactor. The cofactor is Mn(2+).

The enzyme catalyses 2-C-methyl-D-erythritol 4-phosphate + NADP(+) = 1-deoxy-D-xylulose 5-phosphate + NADPH + H(+). The protein operates within isoprenoid biosynthesis; isopentenyl diphosphate biosynthesis via DXP pathway; isopentenyl diphosphate from 1-deoxy-D-xylulose 5-phosphate: step 1/6. In terms of biological role, catalyzes the NADPH-dependent rearrangement and reduction of 1-deoxy-D-xylulose-5-phosphate (DXP) to 2-C-methyl-D-erythritol 4-phosphate (MEP). The sequence is that of 1-deoxy-D-xylulose 5-phosphate reductoisomerase from Anaplasma phagocytophilum (strain HZ).